Reading from the N-terminus, the 252-residue chain is Probable phosphatase SO_1652 (252 aa).

Zn(2+) contacts are provided by histidine 8, histidine 10, histidine 16, histidine 41, glutamate 74, histidine 102, histidine 132, aspartate 193, and histidine 195.

Belongs to the PHP family. It depends on Zn(2+) as a cofactor.

The protein is Probable phosphatase SO_1652 of Shewanella oneidensis (strain ATCC 700550 / JCM 31522 / CIP 106686 / LMG 19005 / NCIMB 14063 / MR-1).